Here is a 272-residue protein sequence, read N- to C-terminus: 4-diphosphocytidyl-2-C-methyl-D-erythritol kinase (272 aa).

Lys-14 is an active-site residue. 92–102 (PMGGGLGGGSS) is a binding site for ATP. The active site involves Asp-132.

Belongs to the GHMP kinase family. IspE subfamily.

The catalysed reaction is 4-CDP-2-C-methyl-D-erythritol + ATP = 4-CDP-2-C-methyl-D-erythritol 2-phosphate + ADP + H(+). It participates in isoprenoid biosynthesis; isopentenyl diphosphate biosynthesis via DXP pathway; isopentenyl diphosphate from 1-deoxy-D-xylulose 5-phosphate: step 3/6. Its function is as follows. Catalyzes the phosphorylation of the position 2 hydroxy group of 4-diphosphocytidyl-2C-methyl-D-erythritol. This chain is 4-diphosphocytidyl-2-C-methyl-D-erythritol kinase, found in Fervidobacterium nodosum (strain ATCC 35602 / DSM 5306 / Rt17-B1).